Here is a 686-residue protein sequence, read N- to C-terminus: Probable serine/threonine-protein kinase pdkA (686 aa).

The disordered stretch occupies residues 1 to 31 (MENIVITNTSGGGGGGVPSSSTDPPNNTTTT). Residues 18-31 (PSSSTDPPNNTTTT) are compositionally biased toward low complexity. Positions 69–449 (FIIGKVLGEG…FDNLKAHPFF (381 aa)) constitute a Protein kinase domain. Residues 79 to 81 (SYG) and K98 each bind ATP. The PIF-pocket stretch occupies residues 100-144 (LEKKQIIKENKIKYVQIEKEIFCKSNHPNIVKLFFTFRSEQCLYY). Residues 147 to 149 (ELC) and D153 each bind ATP. The Proton acceptor role is filled by D192. Positions 196 and 210 each coordinate ATP. Disordered regions lie at residues 211-321 (FGTG…NTNT) and 481-584 (LFSP…NNIS). Over residues 222–257 (SSQQQQQQQQQQQQLPTNSSGNLSSLLNNVNNLSVS) the composition is skewed to low complexity. Polar residues predominate over residues 258–267 (TDLTQQQQNR). Low complexity-rich tracts occupy residues 268-279 (TSSVDSASTTDS), 288-321 (TTTT…NTNT), and 503-568 (NSCN…QRSG). The region spanning 593–682 (VIYQGLVWKR…DSIKSVILSS (90 aa)) is the PH domain.

This sequence belongs to the protein kinase superfamily. AGC Ser/Thr protein kinase family. PDPK1 subfamily.

It carries out the reaction L-seryl-[protein] + ATP = O-phospho-L-seryl-[protein] + ADP + H(+). The catalysed reaction is L-threonyl-[protein] + ATP = O-phospho-L-threonyl-[protein] + ADP + H(+). This Dictyostelium discoideum (Social amoeba) protein is Probable serine/threonine-protein kinase pdkA (pdkA).